Consider the following 157-residue polypeptide: uncharacterized protein (157 aa).

The N-acetyltransferase domain maps to 9 to 146; sequence LLINYKTLDE…GDFYVWHPET (138 aa).

This is an uncharacterized protein from Bacillus cereus (strain ZK / E33L).